The chain runs to 299 residues: Taste receptor type 2 member 50 (299 aa).

A topological domain (extracellular) is located at residue Met1. The chain crosses the membrane as a helical span at residues 2-22; that stretch reads ITFLYIFFSILIMVLFVLGNF. The Cytoplasmic portion of the chain corresponds to 23-55; it reads ANGFIALVNFIDWVKRKKISSADQILTALAVSR. A helical membrane pass occupies residues 56–76; that stretch reads IGLLWTLLLNWYLTVLNPAFY. Residues 77 to 87 are Extracellular-facing; that stretch reads SVELRITSYNA. A helical transmembrane segment spans residues 88–108; the sequence is WVVTNHFSMWLAASLSIFYLL. Residues 109 to 126 lie on the Cytoplasmic side of the membrane; sequence KIANFSNLIFLHLKRRVR. Residues 127–147 traverse the membrane as a helical segment; that stretch reads SVILVILLGTLIFLVCHLLVA. Residues 148-181 lie on the Extracellular side of the membrane; that stretch reads NMDESMWAEEYEGNITGKMKLRNTVHLSYLTVTT. Asn161 carries an N-linked (GlcNAc...) asparagine glycan. Residues 182 to 202 form a helical membrane-spanning segment; the sequence is LWSFIPFTLSLISFLMLICSL. Over 203 to 229 the chain is Cytoplasmic; sequence CKHLKKMQLHGEGSQDLSTKVHIKALQ. The chain crosses the membrane as a helical span at residues 230–250; the sequence is TLISFLLLCAIFFLFLIISVW. The Extracellular segment spans residues 251-259; the sequence is SPRRLRNDP. The chain crosses the membrane as a helical span at residues 260–280; the sequence is VVMVSKAVGNIYLAFDSFILI. The Cytoplasmic segment spans residues 281 to 299; the sequence is WRTKKLKHTFLLILCQIRC.

The protein belongs to the G-protein coupled receptor T2R family.

It localises to the membrane. Receptor that may play a role in the perception of bitterness and is gustducin-linked. May play a role in sensing the chemical composition of the gastrointestinal content. The activity of this receptor may stimulate alpha gustducin, mediate PLC-beta-2 activation and lead to the gating of TRPM5. In Pan paniscus (Pygmy chimpanzee), this protein is Taste receptor type 2 member 50 (TAS2R50).